The chain runs to 316 residues: BTB/POZ domain-containing protein Y57A10B.3 (316 aa).

Residues 1 to 21 (MSAMRRCTCFIICLLTSYTYG) form the signal peptide. N-linked (GlcNAc...) asparagine glycans are attached at residues Asn-91, Asn-107, Asn-118, Asn-133, Asn-191, and Asn-260. The region spanning 158 to 226 (RDAVLIVEGK…VHSTATFPND (69 aa)) is the BTB domain.

The protein resides in the secreted. This is BTB/POZ domain-containing protein Y57A10B.3 (btb-14) from Caenorhabditis elegans.